Consider the following 535-residue polypeptide: Succinate-semialdehyde dehydrogenase, mitochondrial (535 aa).

The transit peptide at 1–47 (MATCIWLRSCGARRLGSTFPGCRLRPRAGGLVPASGPAPGPAQLRCY) directs the protein to the mitochondrion. N6-acetyllysine; alternate is present on K126. K126 is subject to N6-succinyllysine; alternate. N6-succinyllysine occurs at positions 135 and 184. NAD(+) contacts are provided by residues R213 and 228 to 231 (KPAE). Substrate is bound at residue R213. K265 is subject to N6-acetyllysine; alternate. K265 is subject to N6-succinyllysine; alternate. 284-289 (GSTTTG) is an NAD(+) binding site. E306 serves as the catalytic Proton acceptor. Substrate is bound at residue R334. C340 acts as the Nucleophile in catalysis. C340 and C342 form a disulfide bridge. K365 carries the post-translational modification N6-acetyllysine. K402 bears the N6-succinyllysine mark. Position 411 is an N6-acetyllysine (K411). Position 498 (S498) interacts with substrate. Residue S499 is modified to Phosphoserine.

It belongs to the aldehyde dehydrogenase family. In terms of assembly, homotetramer.

The protein localises to the mitochondrion. It catalyses the reaction succinate semialdehyde + NAD(+) + H2O = succinate + NADH + 2 H(+). The protein operates within amino-acid degradation; 4-aminobutanoate degradation. Its activity is regulated as follows. Redox-regulated. Inhibited under oxydizing conditions. Catalyzes one step in the degradation of the inhibitory neurotransmitter gamma-aminobutyric acid (GABA). This chain is Succinate-semialdehyde dehydrogenase, mitochondrial (ALDH5A1), found in Pan troglodytes (Chimpanzee).